Reading from the N-terminus, the 171-residue chain is UPF0398 protein M6_Spy1399 (171 aa).

The protein belongs to the UPF0398 family.

This Streptococcus pyogenes serotype M6 (strain ATCC BAA-946 / MGAS10394) protein is UPF0398 protein M6_Spy1399.